Reading from the N-terminus, the 415-residue chain is Multidrug resistance protein MdtA (415 aa).

The first 21 residues, 1-21 (MKGSYKSRWVIVIVVVIAAIA), serve as a signal peptide directing secretion. Disordered stretches follow at residues 32–59 (SRSA…SGPL) and 392–415 (EAQS…GARS). The span at 399–415 (SEEKATSREYAKKGARS) shows a compositional bias: basic and acidic residues.

This sequence belongs to the membrane fusion protein (MFP) (TC 8.A.1) family. As to quaternary structure, part of a tripartite efflux system composed of MdtA, MdtB and MdtC.

Its subcellular location is the cell inner membrane. In terms of biological role, the MdtABC tripartite complex confers resistance against novobiocin and deoxycholate. The protein is Multidrug resistance protein MdtA of Escherichia coli O17:K52:H18 (strain UMN026 / ExPEC).